A 127-amino-acid chain; its full sequence is Large ribosomal subunit protein bL12 (127 aa).

The protein belongs to the bacterial ribosomal protein bL12 family. Homodimer. Part of the ribosomal stalk of the 50S ribosomal subunit. Forms a multimeric L10(L12)X complex, where L10 forms an elongated spine to which 2 to 4 L12 dimers bind in a sequential fashion. Binds GTP-bound translation factors.

Functionally, forms part of the ribosomal stalk which helps the ribosome interact with GTP-bound translation factors. Is thus essential for accurate translation. The protein is Large ribosomal subunit protein bL12 of Sinorhizobium fredii (strain NBRC 101917 / NGR234).